Reading from the N-terminus, the 118-residue chain is Non-specific lipid-transfer protein 2 (118 aa).

The first 25 residues, 1–25 (MAGVMKLACMVLACMIVAGPITANA), serve as a signal peptide directing secretion. Disulfide bonds link Cys29–Cys76, Cys39–Cys53, Cys54–Cys100, and Cys74–Cys114.

The protein belongs to the plant LTP family.

Its function is as follows. Plant non-specific lipid-transfer proteins transfer phospholipids as well as galactolipids across membranes. May play a role in wax or cutin deposition in the cell walls of expanding epidermal cells and certain secretory tissues. The chain is Non-specific lipid-transfer protein 2 (LTP2) from Arabidopsis thaliana (Mouse-ear cress).